We begin with the raw amino-acid sequence, 504 residues long: Maturase K (504 aa).

Belongs to the intron maturase 2 family. MatK subfamily.

The protein resides in the plastid. It localises to the chloroplast. Usually encoded in the trnK tRNA gene intron. Probably assists in splicing its own and other chloroplast group II introns. In Hamamelis virginiana (Witch-hazel), this protein is Maturase K.